The following is a 513-amino-acid chain: ATP synthase subunit alpha (513 aa).

169–176 (GDRQIGKT) provides a ligand contact to ATP.

Belongs to the ATPase alpha/beta chains family. F-type ATPases have 2 components, CF(1) - the catalytic core - and CF(0) - the membrane proton channel. CF(1) has five subunits: alpha(3), beta(3), gamma(1), delta(1), epsilon(1). CF(0) has three main subunits: a(1), b(2) and c(9-12). The alpha and beta chains form an alternating ring which encloses part of the gamma chain. CF(1) is attached to CF(0) by a central stalk formed by the gamma and epsilon chains, while a peripheral stalk is formed by the delta and b chains.

It is found in the cell inner membrane. The enzyme catalyses ATP + H2O + 4 H(+)(in) = ADP + phosphate + 5 H(+)(out). In terms of biological role, produces ATP from ADP in the presence of a proton gradient across the membrane. The alpha chain is a regulatory subunit. This is ATP synthase subunit alpha from Francisella tularensis subsp. holarctica (strain OSU18).